The sequence spans 624 residues: D-3-phosphoglycerate dehydrogenase 2, chloroplastic (624 aa).

A chloroplast-targeting transit peptide spans 1 to 49 (MAFSSSCSSVKAVNSRWTSPSPSPSSRFAVLPAFLHRRYATSVKLTAIS). S71 is subject to Phosphoserine. Residues 231 to 232 (KV), D251, 310 to 312 (VAR), and D336 each bind NAD(+). R312 is a catalytic residue. Residue E341 is part of the active site. The Proton donor role is filled by H360. Residue 360–363 (HLGA) participates in NAD(+) binding. Residues 552 to 624 (LILCRQVDQP…AIEEFVFLKL (73 aa)) form the ACT domain.

Belongs to the D-isomer specific 2-hydroxyacid dehydrogenase family. Ubiquitous, but highly expressed in roots and in dark-grown leaf tissues. Expressed in the vasculature, stigma, anther filaments and shoot apical meristem. Not detected in the root meristem or in embryo.

Its subcellular location is the plastid. The protein localises to the chloroplast. The enzyme catalyses (2R)-3-phosphoglycerate + NAD(+) = 3-phosphooxypyruvate + NADH + H(+). It functions in the pathway amino-acid biosynthesis; L-serine biosynthesis; L-serine from 3-phospho-D-glycerate: step 1/3. Its activity is regulated as follows. Inhibited by 90 uM 3-phosphonooxypyruvate, but not by Ser, Thr, Val, Gly Trp, O-acetyl-L-Ser and Cys. In terms of biological role, involved in the plastidial phosphorylated pathway of serine biosynthesis (PPSB). The sequence is that of D-3-phosphoglycerate dehydrogenase 2, chloroplastic (PGDH2) from Arabidopsis thaliana (Mouse-ear cress).